The sequence spans 358 residues: MAAMVVGALRRGTATAGGSSRSFARSLPRPVSTLVVAEHEGGFVKPSSLSALAAAEAIGKDDNRVSLLLGGSGPGLHKAAEHAASSHPLVSEVLVADSDVFAHPLAEPWAELLRSVQHKGGYSHVIASSTSFGKNLLPRAAALLDVSPVTDVTSISEPRVFVRPIYAGNALCTVRYTGEDPCMMSIRSTSFSPTEAMSEAKVAPITQVDLSFLSEGSSGKSAWVNLKSQDTERPDLANAPVVVTGGRGLKSAENFKVLEQLAEKLGAAVGATRAAVDAGFVPNELQVGQTGKIVAPELYMAFGVSGAIQHLAGMRDSKVIVAVNKDADAPIFQVADYGIVADLFEVLDELLKKLPDKK.

298–326 is a binding site for FAD; it reads LYMAFGVSGAIQHLAGMRDSKVIVAVNKD.

Belongs to the ETF alpha-subunit/FixB family. As to quaternary structure, heterodimer of an alpha and a beta subunit. FAD serves as cofactor.

The protein resides in the mitochondrion matrix. Its function is as follows. The electron transfer flavoprotein serves as a specific electron acceptor for several dehydrogenases, including five acyl-CoA dehydrogenases, glutaryl-CoA and sarcosine dehydrogenase. It transfers the electrons to the main mitochondrial respiratory chain via ETF-ubiquinone oxidoreductase (ETF dehydrogenase). This Oryza sativa subsp. indica (Rice) protein is Electron transfer flavoprotein subunit alpha, mitochondrial (ETFA).